A 927-amino-acid chain; its full sequence is DNA mismatch repair protein MutS (927 aa).

The interval 44 to 80 (DESLKRPRNRHKPTSVPSIPLDSESQEQLETADNDND) is disordered. The span at 67–79 (ESQEQLETADNDN) shows a compositional bias: acidic residues. Residue 725–732 (GPNASGKS) coordinates ATP.

The protein belongs to the DNA mismatch repair MutS family.

This protein is involved in the repair of mismatches in DNA. It is possible that it carries out the mismatch recognition step. This protein has a weak ATPase activity. The protein is DNA mismatch repair protein MutS of Prochlorococcus marinus (strain MIT 9303).